A 517-amino-acid chain; its full sequence is NEDD8-activating enzyme E1 regulatory subunit (517 aa).

It belongs to the ubiquitin-activating E1 family. ULA1 subfamily. In terms of assembly, heterodimer of uba3 and ula1. The complex binds NEDD8/ubl1 and ubc12.

It is found in the cytoplasm. The protein localises to the nucleus. The protein operates within protein modification; protein neddylation. Its function is as follows. Regulatory subunit of the dimeric uba3-ula1 E1 enzyme. E1 activates NEDD8/ubl1 by first adenylating its C-terminal glycine residue with ATP, thereafter linking this residue to the side chain of the catalytic cysteine, yielding a NEDD8-UBA3 thioester and free AMP. E1 finally transfers NEDD8 to the catalytic cysteine of ubc12. This Schizosaccharomyces pombe (strain 972 / ATCC 24843) (Fission yeast) protein is NEDD8-activating enzyme E1 regulatory subunit (uba5).